A 101-amino-acid chain; its full sequence is Small ribosomal subunit protein bS18c (101 aa).

Positions 1 to 19 (MDKSKQPFHKTKRSFRRRL) are enriched in basic residues. A disordered region spans residues 1–23 (MDKSKQPFHKTKRSFRRRLPPIG).

This sequence belongs to the bacterial ribosomal protein bS18 family. In terms of assembly, part of the 30S ribosomal subunit.

The protein resides in the plastid. It is found in the chloroplast. The protein is Small ribosomal subunit protein bS18c of Lemna minor (Common duckweed).